The primary structure comprises 581 residues: Arginine--tRNA ligase (581 aa).

Positions proline 126–histidine 136 match the 'HIGH' region motif.

This sequence belongs to the class-I aminoacyl-tRNA synthetase family. Monomer.

It localises to the cytoplasm. The enzyme catalyses tRNA(Arg) + L-arginine + ATP = L-arginyl-tRNA(Arg) + AMP + diphosphate. The protein is Arginine--tRNA ligase of Shewanella oneidensis (strain ATCC 700550 / JCM 31522 / CIP 106686 / LMG 19005 / NCIMB 14063 / MR-1).